The primary structure comprises 623 residues: V-type proton ATPase catalytic subunit A (623 aa).

Position 252–259 (252–259 (GAFGCGKT)) interacts with ATP.

The protein belongs to the ATPase alpha/beta chains family. V-ATPase is a heteromultimeric enzyme composed of a peripheral catalytic V1 complex (components A to H) attached to an integral membrane V0 proton pore complex (components: a, c, c'', d and e). Binds to the deubiquitinating enzyme AMSH3.

It localises to the vacuole membrane. The catalysed reaction is ATP + H2O + 4 H(+)(in) = ADP + phosphate + 5 H(+)(out). Functionally, catalytic subunit of the peripheral V1 complex of vacuolar ATPase. V-ATPase vacuolar ATPase is responsible for acidifying a variety of intracellular compartments in eukaryotic cells. This Arabidopsis thaliana (Mouse-ear cress) protein is V-type proton ATPase catalytic subunit A (VHA-A).